The sequence spans 252 residues: Triosephosphate isomerase (252 aa).

8 to 10 is a binding site for substrate; sequence NWK. Residue His-95 is the Electrophile of the active site. The Proton acceptor role is filled by Glu-167. Residues Gly-173, Ser-212, and 233–234 each bind substrate; that span reads GG.

This sequence belongs to the triosephosphate isomerase family. In terms of assembly, homodimer.

The protein localises to the cytoplasm. The enzyme catalyses D-glyceraldehyde 3-phosphate = dihydroxyacetone phosphate. Its pathway is carbohydrate biosynthesis; gluconeogenesis. It functions in the pathway carbohydrate degradation; glycolysis; D-glyceraldehyde 3-phosphate from glycerone phosphate: step 1/1. In terms of biological role, involved in the gluconeogenesis. Catalyzes stereospecifically the conversion of dihydroxyacetone phosphate (DHAP) to D-glyceraldehyde-3-phosphate (G3P). This Lawsonia intracellularis (strain PHE/MN1-00) protein is Triosephosphate isomerase.